Reading from the N-terminus, the 219-residue chain is Probable GTP-binding protein EngB (219 aa).

Residues 31 to 205 (VGVEIAFAGR…LAILNEWCHP (175 aa)) enclose the EngB-type G domain. GTP-binding positions include 39–46 (GRSNAGKS), 66–70 (GRTQL), 84–87 (DLPG), 151–154 (TKSD), and 184–186 (FSS). Mg(2+)-binding residues include Ser46 and Thr68.

This sequence belongs to the TRAFAC class TrmE-Era-EngA-EngB-Septin-like GTPase superfamily. EngB GTPase family. The cofactor is Mg(2+).

In terms of biological role, necessary for normal cell division and for the maintenance of normal septation. The protein is Probable GTP-binding protein EngB of Shewanella baltica (strain OS223).